The following is a 362-amino-acid chain: Heat-inducible transcription repressor HrcA (362 aa).

It belongs to the HrcA family.

Negative regulator of class I heat shock genes (grpE-dnaK-dnaJ and groELS operons). Prevents heat-shock induction of these operons. The protein is Heat-inducible transcription repressor HrcA of Bradyrhizobium sp. (strain ORS 278).